Reading from the N-terminus, the 160-residue chain is Large ribosomal subunit protein uL22c (160 aa).

Belongs to the universal ribosomal protein uL22 family. As to quaternary structure, part of the 50S ribosomal subunit.

It localises to the plastid. The protein resides in the chloroplast. Functionally, this protein binds specifically to 23S rRNA. The globular domain of the protein is located near the polypeptide exit tunnel on the outside of the subunit, while an extended beta-hairpin is found that lines the wall of the exit tunnel in the center of the 70S ribosome. This chain is Large ribosomal subunit protein uL22c (rpl22), found in Arabis hirsuta (Hairy rock-cress).